Here is a 365-residue protein sequence, read N- to C-terminus: Probable caffeine synthase 4 (365 aa).

Y18 serves as a coordination point for S-adenosyl-L-homocysteine. Position 25 (T25) interacts with caffeine. The S-adenosyl-L-homocysteine site is built by C61, N66, D98, L99, S134, and F135. Caffeine is bound by residues Y152, H155, and W156. Positions 173, 259, 261, and 262 each coordinate Mg(2+). F317 is a binding site for caffeine.

This sequence belongs to the methyltransferase superfamily. Type-7 methyltransferase family. The cofactor is Mg(2+).

It participates in alkaloid biosynthesis. In terms of biological role, may be involved in the biosynthesis of caffeine. This is Probable caffeine synthase 4 from Camellia sinensis (Tea plant).